A 365-amino-acid chain; its full sequence is MTGVAAPERIARAVRADIRALTAYPVADAAGCIKLDAMECPYELPAEVRDDIARAARETPLNRYPAAANPALQAQVRQAFEVPAQAGLLFGNGSDELIHLIIQACCEPGDTVLSPWPSFVYFDMAARLSHARFVGVPLTAGLELDLPATLAAIEAHQPKVVFLALPNNPTGGLWPDAAVRAILDAAPGLVVLDEAYQPFAGHTWMPRIMDEPNAVVMRTVSKIGLAGLRFGYLAGHPAWIAEFDKVRPPYNMDVLSQAVLAAVLRHKPVLDAQADRLHADRQPLADGLAALPGVTVFPSAGNFVLARFCGKLDGNAVHLALKTRKILVRNFSNAHPLLADCLRISVGTPTENAAVLSALQDILSA.

K222 carries the N6-(pyridoxal phosphate)lysine modification.

Belongs to the class-II pyridoxal-phosphate-dependent aminotransferase family. Histidinol-phosphate aminotransferase subfamily. In terms of assembly, homodimer. Pyridoxal 5'-phosphate serves as cofactor.

The enzyme catalyses L-histidinol phosphate + 2-oxoglutarate = 3-(imidazol-4-yl)-2-oxopropyl phosphate + L-glutamate. It functions in the pathway amino-acid biosynthesis; L-histidine biosynthesis; L-histidine from 5-phospho-alpha-D-ribose 1-diphosphate: step 7/9. This is Histidinol-phosphate aminotransferase 2 (hisC2) from Bordetella parapertussis (strain 12822 / ATCC BAA-587 / NCTC 13253).